The primary structure comprises 114 residues: Vacuolar ATPase assembly integral membrane protein VMA21 (114 aa).

Over 1–39 (MATRRIISQEKTLLEKDDSIGSSPAADEKSNIAPAVPTS) the chain is Cytoplasmic. A helical transmembrane segment spans residues 40–60 (VIMKLLAFTLGMIVIPIGSYF). Topologically, residues 61 to 73 (ATVDSVFNGNSTY) are lumenal. The chain crosses the membrane as a helical span at residues 74–94 (AGALAAIMANVVLIGYIFVAM). Over 95–114 (AEDQSDQQEGGGPGDGKKDR) the chain is Cytoplasmic. Residues 111-114 (KKDR) carry the Prevents secretion from ER motif.

Belongs to the VMA21 family.

The protein resides in the endoplasmic reticulum membrane. It localises to the endoplasmic reticulum-Golgi intermediate compartment membrane. It is found in the cytoplasmic vesicle. The protein localises to the COPII-coated vesicle membrane. Functionally, required for the assembly of the V0 complex of the vacuolar ATPase (V-ATPase) in the endoplasmic reticulum. The protein is Vacuolar ATPase assembly integral membrane protein VMA21 of Chaetomium globosum (strain ATCC 6205 / CBS 148.51 / DSM 1962 / NBRC 6347 / NRRL 1970) (Soil fungus).